The sequence spans 355 residues: UDP-N-acetylglucosamine--N-acetylmuramyl-(pentapeptide) pyrophosphoryl-undecaprenol N-acetylglucosamine transferase (355 aa).

Residues 14–16 (TGG), asparagine 126, arginine 164, serine 190, isoleucine 243, 262–267 (ALTVAE), and glutamine 288 each bind UDP-N-acetyl-alpha-D-glucosamine.

It belongs to the glycosyltransferase 28 family. MurG subfamily.

It is found in the cell inner membrane. The catalysed reaction is di-trans,octa-cis-undecaprenyl diphospho-N-acetyl-alpha-D-muramoyl-L-alanyl-D-glutamyl-meso-2,6-diaminopimeloyl-D-alanyl-D-alanine + UDP-N-acetyl-alpha-D-glucosamine = di-trans,octa-cis-undecaprenyl diphospho-[N-acetyl-alpha-D-glucosaminyl-(1-&gt;4)]-N-acetyl-alpha-D-muramoyl-L-alanyl-D-glutamyl-meso-2,6-diaminopimeloyl-D-alanyl-D-alanine + UDP + H(+). Its pathway is cell wall biogenesis; peptidoglycan biosynthesis. Functionally, cell wall formation. Catalyzes the transfer of a GlcNAc subunit on undecaprenyl-pyrophosphoryl-MurNAc-pentapeptide (lipid intermediate I) to form undecaprenyl-pyrophosphoryl-MurNAc-(pentapeptide)GlcNAc (lipid intermediate II). The sequence is that of UDP-N-acetylglucosamine--N-acetylmuramyl-(pentapeptide) pyrophosphoryl-undecaprenol N-acetylglucosamine transferase from Psychromonas ingrahamii (strain DSM 17664 / CCUG 51855 / 37).